A 734-amino-acid chain; its full sequence is MSMFIRKEIDLGSGKTLSIETGKMAKQADGSAIVRLNDTMVLATVVSSKTPPSPNQSFFPLQVEYREKYSAAGKFPGGFFKREGRPSEKEILSARLIDRALRPLFPDGYYQDTQIIISVISSDQINDADVLGGVAASAAIMVSDIPFQNSMSEVRVGRVNGEYIVNPNINELRDSDIDISIGGTENTICMLEGEMDEISEAEMLEAIRFGHEAIKKICALQNEIAAEVGKTARTFSAAKAPDNLRQSIAEICSNELKELAYMPLCKEERAEKTAEIYKNAKAQTLQRYQQEITPEVIAAEPEKALYLNEQIIGDAIHSIEKQVMREMILDDAKRLDGRRLDEVRPISIELGLIPRAHGSALFTRGETQALVTLTLGTKKDAQMIDTLTDDADKRFMLHYNFPPFSVGETGRVGGTSRREIGHGNLAERAIRKVAPAESAFPYTIRIVSDILESNGSSSMASVCGGALAAMDGGVPLRKPVSGIAMGLIKEGDRYAVLSDILGNEDHLGDMDFKVAGTADGITACQMDIKIDGLDYHILEQALEQALHGRLHILDKMNEAIQEPRTEIGKYAPKLTTIQIPVDAIGMVIGKGGETIRSITEETGAEINIEDDGTVTIASASGEGASAALETIKLLISKPEVGTVYSGKVRDIREDLGAFVEFLPKTDGLVHISEISNERVAKVSDHLKPGDKVKVKLVDVRKDPRTGKTRFALSIKALAEKSADNGASDKAEANR.

Aspartate 505 and aspartate 511 together coordinate Mg(2+). One can recognise a KH domain in the interval 572–631 (PKLTTIQIPVDAIGMVIGKGGETIRSITEETGAEINIEDDGTVTIASASGEGASAALETI). The region spanning 641-715 (GTVYSGKVRD…GKTRFALSIK (75 aa)) is the S1 motif domain.

The protein belongs to the polyribonucleotide nucleotidyltransferase family. Mg(2+) serves as cofactor.

The protein localises to the cytoplasm. It carries out the reaction RNA(n+1) + phosphate = RNA(n) + a ribonucleoside 5'-diphosphate. Involved in mRNA degradation. Catalyzes the phosphorolysis of single-stranded polyribonucleotides processively in the 3'- to 5'-direction. The chain is Polyribonucleotide nucleotidyltransferase from Prosthecochloris aestuarii (strain DSM 271 / SK 413).